The following is a 94-amino-acid chain: Fungal defensin scedosporisin-2 (94 aa).

Positions 1-25 (MKFSNISIAALFTILASTAMAAPAA) are cleaved as a signal peptide. Positions 26 to 56 (DSPDSIVAREPAPVEETYEAPSGLEKRGFGC) are excised as a propeptide. 3 residues coordinate beta-D-GlcNAc-(1-&gt;4)-Mur2Ac(oyl-L-Ala-gamma-D-Glu-L-Lys-D-Ala-D-Ala)-di-trans,octa-cis-undecaprenyl diphosphate: F54, G55, and C56. Disulfide bonds link C56–C78, C63–C91, and C67–C93. Positions 57-60 (PGSE) are interaction site with membrane interface. Beta-D-GlcNAc-(1-&gt;4)-Mur2Ac(oyl-L-Ala-gamma-D-Glu-L-Lys-D-Ala-D-Ala)-di-trans,octa-cis-undecaprenyl diphosphate is bound at residue H66. The interval 83–90 (IPFVGRPR) is interaction site with membrane interface. Beta-D-GlcNAc-(1-&gt;4)-Mur2Ac(oyl-L-Ala-gamma-D-Glu-L-Lys-D-Ala-D-Ala)-di-trans,octa-cis-undecaprenyl diphosphate is bound at residue C91.

It belongs to the invertebrate defensin family.

It localises to the secreted. It is found in the target cell membrane. Its function is as follows. Antibacterial peptide potently active against Gram-positive bacteria. May act by selectively inhibiting peptidoglycan biosynthesis through complex formation with the cell wall precursor lipid II (1:1 molar ratio) thus inhibiting cell wall synthesis. Shows remarkably activity against resistant isolates such as methicillin-resistant Staphylococcus aureus (MRSA) and vancomycin-resistant Enterococci (VRE) at the concentration of micromolar level. Does not act by destroying the membrane integrity, which is consistent with its nonamphiphilic architecture. Acts more rapidly than vancomycin. Shows low hemolysis and cytotoxicity and high serum stability. In vivo, is as efficient as vancomycin to protect mouse peritonitis models from MRSA infections. The chain is Fungal defensin scedosporisin-2 from Pseudallescheria apiosperma (Scedosporium apiospermum).